A 394-amino-acid chain; its full sequence is Putative pectate lyase 17 (394 aa).

The signal sequence occupies residues 1–22 (MTHFTVSCLLVALFLCQSLVHA). Positions 192, 216, and 220 each coordinate Ca(2+). Residue Arg272 is part of the active site.

It belongs to the polysaccharide lyase 1 family. It depends on Ca(2+) as a cofactor.

The catalysed reaction is Eliminative cleavage of (1-&gt;4)-alpha-D-galacturonan to give oligosaccharides with 4-deoxy-alpha-D-galact-4-enuronosyl groups at their non-reducing ends.. The protein operates within glycan metabolism; pectin degradation; 2-dehydro-3-deoxy-D-gluconate from pectin: step 2/5. The protein is Putative pectate lyase 17 of Arabidopsis thaliana (Mouse-ear cress).